The sequence spans 259 residues: Ribonuclease PH (259 aa).

Residues Arg88 and Gly126–Arg128 each bind phosphate.

The protein belongs to the RNase PH family. In terms of assembly, homohexameric ring arranged as a trimer of dimers.

It carries out the reaction tRNA(n+1) + phosphate = tRNA(n) + a ribonucleoside 5'-diphosphate. In terms of biological role, phosphorolytic 3'-5' exoribonuclease that plays an important role in tRNA 3'-end maturation. Removes nucleotide residues following the 3'-CCA terminus of tRNAs; can also add nucleotides to the ends of RNA molecules by using nucleoside diphosphates as substrates, but this may not be physiologically important. Probably plays a role in initiation of 16S rRNA degradation (leading to ribosome degradation) during starvation. The protein is Ribonuclease PH of Mycolicibacterium smegmatis (strain ATCC 700084 / mc(2)155) (Mycobacterium smegmatis).